Reading from the N-terminus, the 35-residue chain is Alpha-amanitin proprotein 1 (35 aa).

A propeptide spanning residues 1-10 is cleaved from the precursor; it reads MSDINATRLP. Position 11 is a (3R,4R)-4,5-dihydroxyisoleucine; in form alpha-amanitin (isoleucine 11). Isoleucine 11 carries the (3R,4S)-4-hydroxyisoleucine; in form gamma-amanitin modification. Residues 11–18 constitute a cross-link (cyclopeptide (Ile-Pro)); it reads IWGIGCNP. The 2'-cysteinyl-6'-hydroxytryptophan sulfoxide (Trp-Cys) cross-link spans 12-16; it reads WGIGC. A 4-hydroxyproline modification is found at proline 18. Positions 19–35 are excised as a propeptide; it reads CVGDDVTSVLTRGEALC.

The protein belongs to the MSDIN fungal toxin family. Post-translationally, processed by the macrocyclase-peptidase enzyme POPB to yield a toxic cyclic octapeptide. POPB first removes 10 residues from the N-terminus. Conformational trapping of the remaining peptide forces the enzyme to release this intermediate rather than proceed to macrocyclization. The enzyme rebinds the remaining peptide in a different conformation and catalyzes macrocyclization of the N-terminal 8 residues. In terms of tissue distribution, expressed in basidiocarps.

Its function is as follows. Major toxin belonging to the bicyclic octapeptides amatoxins that acts by binding non-competitively to RNA polymerase II and greatly slowing the elongation of transcripts from target promoters. This chain is Alpha-amanitin proprotein 1, found in Amanita exitialis (Guangzhou destroying angel).